The primary structure comprises 346 residues: MQLSDFDFDLPERLIATRPARPRTAARLLLAEGDRIEDRHVRDLVGIFRPGDRLVLNNTRVIPARLTGTRTRGEAEARIEVTLMEPAAAGGWRAMAKPLRKLKPGETIRFSDALSAEVAEKGETDLRLVFDRAGAAFDAALADAGAMPLPPYIAARRAPDAQDDEDYQTVFARHAGAVAAPTASLHFDRPLLEALAARGVGFTEVTLHVGAGTFLPVKVEDVTTHRMHAEWGEVTEAAAAEIAATKAAGGRVIPVGTTALRLIESAAASGAIRPWRGETDIFIYPGYRFRVTDALMTNFHLPKSTLLMLVSALMGQERIRAIYDHAVRHDYRFFSYGDASLLIPGG.

Belongs to the QueA family. In terms of assembly, monomer.

The protein localises to the cytoplasm. It catalyses the reaction 7-aminomethyl-7-carbaguanosine(34) in tRNA + S-adenosyl-L-methionine = epoxyqueuosine(34) in tRNA + adenine + L-methionine + 2 H(+). It functions in the pathway tRNA modification; tRNA-queuosine biosynthesis. Its function is as follows. Transfers and isomerizes the ribose moiety from AdoMet to the 7-aminomethyl group of 7-deazaguanine (preQ1-tRNA) to give epoxyqueuosine (oQ-tRNA). This chain is S-adenosylmethionine:tRNA ribosyltransferase-isomerase, found in Cereibacter sphaeroides (strain KD131 / KCTC 12085) (Rhodobacter sphaeroides).